Here is a 115-residue protein sequence, read N- to C-terminus: Aspartate 1-decarboxylase (115 aa).

Residue serine 25 is the Schiff-base intermediate with substrate; via pyruvic acid of the active site. Serine 25 carries the post-translational modification Pyruvic acid (Ser). Threonine 57 is a binding site for substrate. Tyrosine 58 functions as the Proton donor in the catalytic mechanism. Residue 71 to 73 (GAA) coordinates substrate.

This sequence belongs to the PanD family. As to quaternary structure, heterooctamer of four alpha and four beta subunits. Pyruvate is required as a cofactor. In terms of processing, is synthesized initially as an inactive proenzyme, which is activated by self-cleavage at a specific serine bond to produce a beta-subunit with a hydroxyl group at its C-terminus and an alpha-subunit with a pyruvoyl group at its N-terminus.

The protein localises to the cytoplasm. It carries out the reaction L-aspartate + H(+) = beta-alanine + CO2. Its pathway is cofactor biosynthesis; (R)-pantothenate biosynthesis; beta-alanine from L-aspartate: step 1/1. Catalyzes the pyruvoyl-dependent decarboxylation of aspartate to produce beta-alanine. This chain is Aspartate 1-decarboxylase, found in Campylobacter curvus (strain 525.92).